Consider the following 392-residue polypeptide: MSKHIVILGAGYGGVLSALTVRKHYTKEQARVTVVNKYPTHQIITELHRLAAGNVSEKAVAMPLEKLFKGKDIDLKIAEVSSFSVDKKEVALADGSTLTYDALVVGLGSVTAYFGIPGLEENSMVLKSAADANKVFQHVEDRVREYSKTKNEADATILIGGGGLTGVELVGELADIMPNLAKKYGVDHKEIKLKLVEAGPKILPVLPDDLIERATASLEKRGVEFLTGLPVTNVEGNVIDLKDGSKVVANTFVWTGGVQGNPLVGESGLEVNRGRATVNDFLQSTSHEDVFVAGDSAVYFGPDGRPYPPTAQIAWQMGELIGYNLFAYLEGKTLETFKPVNSGTLASLGRKDAVAIIGANSTPLKGLPASLMKEASNVRYLTHIKGLFSLAY.

It belongs to the NADH dehydrogenase family. It depends on FAD as a cofactor.

The sequence is that of NADH dehydrogenase-like protein YjlD (yjlD) from Bacillus subtilis (strain 168).